The chain runs to 92 residues: Small ribosomal subunit protein bS21A (92 aa).

Residues 25 to 52 (GVFREMKQRRSYEKPSERKTREKSEAIR) show a composition bias toward basic and acidic residues. The disordered stretch occupies residues 25–92 (GVFREMKQRR…LPQTAARPAG (68 aa)).

It belongs to the bacterial ribosomal protein bS21 family.

This is Small ribosomal subunit protein bS21A from Bradyrhizobium diazoefficiens (strain JCM 10833 / BCRC 13528 / IAM 13628 / NBRC 14792 / USDA 110).